Here is a 431-residue protein sequence, read N- to C-terminus: Enolase (431 aa).

Gln166 provides a ligand contact to (2R)-2-phosphoglycerate. Residue Glu208 is the Proton donor of the active site. Residues Asp245, Glu288, and Asp315 each contribute to the Mg(2+) site. Residues Lys340, Arg369, Ser370, and Lys391 each contribute to the (2R)-2-phosphoglycerate site. Lys340 functions as the Proton acceptor in the catalytic mechanism.

Belongs to the enolase family. Mg(2+) serves as cofactor.

Its subcellular location is the cytoplasm. It is found in the secreted. The protein localises to the cell surface. It carries out the reaction (2R)-2-phosphoglycerate = phosphoenolpyruvate + H2O. It participates in carbohydrate degradation; glycolysis; pyruvate from D-glyceraldehyde 3-phosphate: step 4/5. Catalyzes the reversible conversion of 2-phosphoglycerate (2-PG) into phosphoenolpyruvate (PEP). It is essential for the degradation of carbohydrates via glycolysis. The chain is Enolase from Clostridium tetani (strain Massachusetts / E88).